A 262-amino-acid polypeptide reads, in one-letter code: Acyl-[acyl-carrier-protein]--UDP-N-acetylglucosamine O-acyltransferase (262 aa).

The protein belongs to the transferase hexapeptide repeat family. LpxA subfamily. Homotrimer.

It is found in the cytoplasm. It carries out the reaction a (3R)-hydroxyacyl-[ACP] + UDP-N-acetyl-alpha-D-glucosamine = a UDP-3-O-[(3R)-3-hydroxyacyl]-N-acetyl-alpha-D-glucosamine + holo-[ACP]. It participates in glycolipid biosynthesis; lipid IV(A) biosynthesis; lipid IV(A) from (3R)-3-hydroxytetradecanoyl-[acyl-carrier-protein] and UDP-N-acetyl-alpha-D-glucosamine: step 1/6. Involved in the biosynthesis of lipid A, a phosphorylated glycolipid that anchors the lipopolysaccharide to the outer membrane of the cell. In Haemophilus influenzae (strain PittEE), this protein is Acyl-[acyl-carrier-protein]--UDP-N-acetylglucosamine O-acyltransferase.